The chain runs to 790 residues: von Willebrand factor A domain-containing protein 2 (790 aa).

An N-terminal signal peptide occupies residues 1 to 22; sequence MRLPWVNGILAFLSSQVLQCLC. Residues 50–221 enclose the VWFA 1 domain; the sequence is DILILLDGSN…DAVNGLATSL (172 aa). Residues 295 to 332 form the EGF-like 1 domain; the sequence is PDPCDSQPCKNGGTCIAEGQDKYHCVCPAGFGGDTECA. Disulfide bonds link Cys298/Cys309, Cys303/Cys319, and Cys321/Cys331. VWFA domains follow at residues 342-518 and 532-702; these read DLLF…QKRI and DLAF…EDSV. In terms of domain architecture, EGF-like 2 spans 713-748; that stretch reads PVNLCKPNPCMNDGVCILRQGSYRCDCRGWDGPHCE. Cystine bridges form between Cys717-Cys728, Cys722-Cys737, and Cys739-Cys747. The interval 758–790 is disordered; that stretch reads WPQGLHSRSRQQRHSRKRRLKSVSGSRSSRKKP. Residues 764 to 778 show a composition bias toward basic residues; that stretch reads SRSRQQRHSRKRRLK.

Forms monomers and multimers.

The protein localises to the secreted. In Xenopus laevis (African clawed frog), this protein is von Willebrand factor A domain-containing protein 2 (vwa2).